The chain runs to 696 residues: C2 domain-containing protein 2 (696 aa).

Residues 8–28 (VQWLFLVSLFVAALGTVGLYL) form a helical membrane-spanning segment. The SMP-LBD domain maps to 45–238 (EPDELRRRES…PTQVKEAQSL (194 aa)). At Ser-54 the chain carries Phosphoserine. Residues 241–357 (PSSTAQEPCP…RKQPNGPQTF (117 aa)) enclose the C2 domain. Phosphoserine is present on Ser-436. Thr-440 carries the phosphothreonine modification. Residues 551–611 (ATEASATTPP…DGDELSESSL (61 aa)) form a disordered region. The segment covering 573-588 (KPRENDLDSWELEKES) has biased composition (basic and acidic residues). Ser-581 carries the post-translational modification Phosphoserine.

Its subcellular location is the membrane. The polypeptide is C2 domain-containing protein 2 (Mus musculus (Mouse)).